We begin with the raw amino-acid sequence, 161 residues long: Mediator of RNA polymerase II transcription subunit 10 (161 aa).

The protein belongs to the Mediator complex subunit 10 family. As to quaternary structure, component of the Mediator complex.

The protein localises to the nucleus. Component of the Mediator complex, a coactivator involved in the regulated transcription of nearly all RNA polymerase II-dependent genes. Mediator functions as a bridge to convey information from gene-specific regulatory proteins to the basal RNA polymerase II transcription machinery. Mediator is recruited to promoters by direct interactions with regulatory proteins and serves as a scaffold for the assembly of a functional preinitiation complex with RNA polymerase II and the general transcription factors. This Kluyveromyces lactis (strain ATCC 8585 / CBS 2359 / DSM 70799 / NBRC 1267 / NRRL Y-1140 / WM37) (Yeast) protein is Mediator of RNA polymerase II transcription subunit 10 (NUT2).